Reading from the N-terminus, the 121-residue chain is Large ribosomal subunit protein uL18 (121 aa).

Belongs to the universal ribosomal protein uL18 family. As to quaternary structure, part of the 50S ribosomal subunit; part of the 5S rRNA/L5/L18/L25 subcomplex. Contacts the 5S and 23S rRNAs.

Its function is as follows. This is one of the proteins that bind and probably mediate the attachment of the 5S RNA into the large ribosomal subunit, where it forms part of the central protuberance. In Burkholderia mallei (strain NCTC 10247), this protein is Large ribosomal subunit protein uL18.